The following is a 630-amino-acid chain: Zinc finger protein MSN4 (630 aa).

Methionine 1 carries the N-acetylmethionine modification. The span at 37 to 56 (TTNVSATSSNDNSANNSISS) shows a compositional bias: low complexity. 2 disordered regions span residues 37–77 (TTNV…ATNT) and 115–137 (FVND…DKIY). Serine 178 is modified (phosphoserine). Residues 237–245 (SILEDFVSS) carry the 9aaTAD motif. Serine 263 carries the phosphoserine modification. Residues 292-303 (KNSSNSKPTQQI) are compositionally biased toward polar residues. Disordered stretches follow at residues 292–322 (KNSS…SPTT) and 360–379 (SISS…RQQR). Residues serine 316 and serine 319 each carry the phosphoserine modification. Positions 360–373 (SISSSLNRISHSSS) are enriched in low complexity. Threonine 479 is modified (phosphothreonine). The disordered stretch occupies residues 502–566 (TSQAHHAAQH…KSITTIDPNN (65 aa)). The segment covering 504–515 (QAHHAAQHHQQQ) has biased composition (low complexity). 2 stretches are compositionally biased toward polar residues: residues 516 to 525 (PTKQATVSPN) and 532 to 547 (SSVT…NNNG). At serine 558 the chain carries Phosphoserine. 2 consecutive C2H2-type zinc fingers follow at residues 573–596 (FKCK…RSVH) and 602–624 (FACM…LKTH).

The protein resides in the cytoplasm. Its subcellular location is the nucleus. Its function is as follows. Positive transcriptional factor that acts as a component of the stress responsive system. Recognizes and binds to the stress response element (STRE) which is involved in the response to various forms of stress (heat, oxidative, osmotic, etc.). Involved in the regulation of the CTT1, DDR2, HSP12 genes. In Saccharomyces cerevisiae (strain ATCC 204508 / S288c) (Baker's yeast), this protein is Zinc finger protein MSN4 (MSN4).